Consider the following 415-residue polypeptide: Tyrosine--tRNA ligase (415 aa).

An L-tyrosine-binding site is contributed by Tyr-34. The 'HIGH' region signature appears at 39–48 (PTADSLHLGH). The L-tyrosine site is built by Tyr-164 and Gln-168. The short motif at 226–230 (KFGKS) is the 'KMSKS' region element. Lys-229 contributes to the ATP binding site. The 68-residue stretch at 348-415 (KNIVDFLVDG…KKKYFLGKIK (68 aa)) folds into the S4 RNA-binding domain.

This sequence belongs to the class-I aminoacyl-tRNA synthetase family. TyrS type 1 subfamily. In terms of assembly, homodimer.

It is found in the cytoplasm. It carries out the reaction tRNA(Tyr) + L-tyrosine + ATP = L-tyrosyl-tRNA(Tyr) + AMP + diphosphate + H(+). Its function is as follows. Catalyzes the attachment of tyrosine to tRNA(Tyr) in a two-step reaction: tyrosine is first activated by ATP to form Tyr-AMP and then transferred to the acceptor end of tRNA(Tyr). This chain is Tyrosine--tRNA ligase, found in Leuconostoc citreum (strain KM20).